Here is a 101-residue protein sequence, read N- to C-terminus: Small ribosomal subunit protein uS14 (101 aa).

The tract at residues 36–61 is disordered; it reads ASAEDRRAARQKLQSLPRNSSPVRQR. Residues 47-59 are compositionally biased toward polar residues; it reads KLQSLPRNSSPVR.

The protein belongs to the universal ribosomal protein uS14 family. Part of the 30S ribosomal subunit. Contacts proteins S3 and S10.

Functionally, binds 16S rRNA, required for the assembly of 30S particles and may also be responsible for determining the conformation of the 16S rRNA at the A site. The polypeptide is Small ribosomal subunit protein uS14 (Methylobacillus flagellatus (strain ATCC 51484 / DSM 6875 / VKM B-1610 / KT)).